A 192-amino-acid polypeptide reads, in one-letter code: Thymidine kinase (192 aa).

Residues 9–16 (SAMNAGKS) and 87–90 (DECQ) each bind ATP. Residue glutamate 88 is the Proton acceptor of the active site. Residues cysteine 145, cysteine 147, cysteine 182, and histidine 185 each contribute to the Zn(2+) site.

This sequence belongs to the thymidine kinase family. Homotetramer.

Its subcellular location is the cytoplasm. It carries out the reaction thymidine + ATP = dTMP + ADP + H(+). This is Thymidine kinase from Vibrio cholerae serotype O1 (strain ATCC 39315 / El Tor Inaba N16961).